The primary structure comprises 347 residues: 4-hydroxy-2-oxovalerate aldolase (347 aa).

The 251-residue stretch at 2-252 (ILISDATLRD…DTRTTFERVM (251 aa)) folds into the Pyruvate carboxyltransferase domain. 10 to 11 (RD) contacts substrate. Residue aspartate 11 coordinates Mn(2+). Catalysis depends on histidine 14, which acts as the Proton acceptor. Substrate contacts are provided by serine 164 and histidine 191. Residues histidine 191 and histidine 193 each coordinate Mn(2+).

This sequence belongs to the 4-hydroxy-2-oxovalerate aldolase family.

The enzyme catalyses (S)-4-hydroxy-2-oxopentanoate = acetaldehyde + pyruvate. This Burkholderia pseudomallei (strain K96243) protein is 4-hydroxy-2-oxovalerate aldolase (mhpE).